Here is a 153-residue protein sequence, read N- to C-terminus: Agglutinin (153 aa).

Beta-D-galactosyl-(1-&gt;3)-N-acetyl-D-galactosamine is bound by residues 22-25 and Asn-46; that span reads NAWE. The region spanning 58-153 is the Ricin B-type lectin domain; sequence GDSAEYLIIN…DNQKWYFDAK (96 aa).

In terms of assembly, homodimer.

Functionally, lectin that primarily recognizes glycans with a non-reducing terminal N-acetylgalactosamine (GalNAc), with a preference for the alpha- over the beta-anomer. Can also bind non-reducing terminal galactose (Gal) residues but with a lower affinity. Strongly interacts with glycolipid type glycans with terminal non-reducing Gal or GalNAc but fails to bind sialylated or fucosylated forms of the same glycans. Strongly interacts with galactosylated N-glycans, displaying highest affinity for alpha-1-3 branched mono-antennary N-glycans but also binding to multi-antennary glycans. This is Agglutinin from Sclerotinia sclerotiorum (strain ATCC 18683 / 1980 / Ss-1) (White mold).